Here is a 150-residue protein sequence, read N- to C-terminus: 3-dehydroquinate dehydratase (150 aa).

The active-site Proton acceptor is the Y26. N77, H83, and D90 together coordinate substrate. H103 acts as the Proton donor in catalysis. Residues 104 to 105 (LS) and R114 contribute to the substrate site.

The protein belongs to the type-II 3-dehydroquinase family. Homododecamer.

It carries out the reaction 3-dehydroquinate = 3-dehydroshikimate + H2O. The protein operates within metabolic intermediate biosynthesis; chorismate biosynthesis; chorismate from D-erythrose 4-phosphate and phosphoenolpyruvate: step 3/7. Functionally, catalyzes a trans-dehydration via an enolate intermediate. The chain is 3-dehydroquinate dehydratase from Pectobacterium atrosepticum (strain SCRI 1043 / ATCC BAA-672) (Erwinia carotovora subsp. atroseptica).